The following is a 599-amino-acid chain: Elongation factor 4 (599 aa).

In terms of domain architecture, tr-type G spans 5–187; it reads SKIRNFSIVA…AIVKRLPAPT (183 aa). Residues 17–22 and 134–137 contribute to the GTP site; these read DHGKST and NKID.

It belongs to the TRAFAC class translation factor GTPase superfamily. Classic translation factor GTPase family. LepA subfamily.

It localises to the cell inner membrane. It catalyses the reaction GTP + H2O = GDP + phosphate + H(+). Required for accurate and efficient protein synthesis under certain stress conditions. May act as a fidelity factor of the translation reaction, by catalyzing a one-codon backward translocation of tRNAs on improperly translocated ribosomes. Back-translocation proceeds from a post-translocation (POST) complex to a pre-translocation (PRE) complex, thus giving elongation factor G a second chance to translocate the tRNAs correctly. Binds to ribosomes in a GTP-dependent manner. The polypeptide is Elongation factor 4 (Ruegeria sp. (strain TM1040) (Silicibacter sp.)).